The sequence spans 215 residues: MGKVYDWFEERLEIQAIADDISSKYVPPHVNIFYCLGGITFTSFVIQVASGFAMTFYYRPTVTEAFASVQYIMTEVNFGWLIRSVHRWSASMMVLMMILHIFRVYLTGGFKKPRELTWVTGVILSVLTVSFGVTGYSLPWDQVGYWAVKIVTGVPDAIPVIGSTVVELLRGSVSVGQSTLTRFYSLHTFVLPLLTAVFMLMHFLMIRKQGISGPL.

A helical membrane pass occupies residues 32–52 (IFYCLGGITFTSFVIQVASGF). Residue C35 participates in heme c binding. 2 residues coordinate heme b: H86 and H100. 3 helical membrane-spanning segments follow: residues 90 to 110 (ASMM…TGGF), 116 to 136 (LTWV…VTGY), and 186 to 206 (LHTF…FLMI). 2 residues coordinate heme b: H187 and H202.

The protein belongs to the cytochrome b family. PetB subfamily. The 4 large subunits of the cytochrome b6-f complex are cytochrome b6, subunit IV (17 kDa polypeptide, PetD), cytochrome f and the Rieske protein, while the 4 small subunits are PetG, PetL, PetM and PetN. The complex functions as a dimer. Heme b serves as cofactor. Requires heme c as cofactor.

Its subcellular location is the plastid. It is found in the chloroplast thylakoid membrane. Its function is as follows. Component of the cytochrome b6-f complex, which mediates electron transfer between photosystem II (PSII) and photosystem I (PSI), cyclic electron flow around PSI, and state transitions. This Chaetosphaeridium globosum (Charophycean green alga) protein is Cytochrome b6.